Here is a 533-residue protein sequence, read N- to C-terminus: Di/tripeptide-binding protein 3 (533 aa).

An N-terminal signal peptide occupies residues 1 to 24 (MRKILPLRAWLAAGLILGSPFSHA).

The protein belongs to the bacterial solute-binding protein 5 family. In terms of assembly, the complex is composed of two ATP-binding proteins (DppD and DppF), two transmembrane proteins (DppB and DppC) and a solute-binding protein (DppA3). Five orthologous SBPs (DppA1-A5) are present in P.aeruginosa, which increases the substrate specificity of the DppBCDF transporter.

Part of the ABC transporter DppABCDF involved in the uptake of various di/tripeptides. Prefers dipeptides with acidic residues at the C-terminal end. Involved in the uptake of phaseolotoxin, a toxic tripeptide inhibiting the enzyme ornithine carbamoyltransferase. In Pseudomonas aeruginosa (strain UCBPP-PA14), this protein is Di/tripeptide-binding protein 3.